The sequence spans 160 residues: Cyanate hydratase (160 aa).

Catalysis depends on residues arginine 100, glutamate 103, and serine 126.

It belongs to the cyanase family.

The catalysed reaction is cyanate + hydrogencarbonate + 3 H(+) = NH4(+) + 2 CO2. Its function is as follows. Catalyzes the reaction of cyanate with bicarbonate to produce ammonia and carbon dioxide. The protein is Cyanate hydratase of Aspergillus niger (strain ATCC MYA-4892 / CBS 513.88 / FGSC A1513).